A 447-amino-acid chain; its full sequence is SPARC-related modular calcium-binding protein 2 (447 aa).

The first 21 residues, 1-21, serve as a signal peptide directing secretion; that stretch reads MLPPQLCWLPLLAALLPPVPA. Residues 34–86 enclose the Kazal-like domain; the sequence is QDKDRDCSLDCPSSPQKPLCASDGRTFLSRCEFQRAKCKDPQLEIAHRGNCKD. 6 disulfide bridges follow: cysteine 40/cysteine 71, cysteine 44/cysteine 64, cysteine 53/cysteine 84, cysteine 90/cysteine 113, cysteine 124/cysteine 131, and cysteine 133/cysteine 153. Residues 87-153 enclose the Thyroglobulin type-1 1 domain; it reads VSRCVAERKY…TAVAHKTPRC (67 aa). Residues 147 to 230 are disordered; the sequence is AHKTPRCPGS…QSALEEAKQP (84 aa). The segment covering 161-172 has biased composition (basic and acidic residues); that stretch reads VPQREGAGKADD. Residue asparagine 206 is glycosylated (N-linked (GlcNAc...) asparagine). The segment covering 206–216 has biased composition (polar residues); the sequence is NKTNKNSASSC. Positions 213-281 constitute a Thyroglobulin type-1 2 domain; that stretch reads ASSCDQEHQS…TSTRYEQPKC (69 aa). 3 cysteine pairs are disulfide-bonded: cysteine 216/cysteine 240, cysteine 251/cysteine 258, and cysteine 260/cysteine 281. Over residues 217–230 the composition is skewed to basic and acidic residues; the sequence is DQEHQSALEEAKQP. EF-hand domains are found at residues 347-382 and 384-419; these read LEER…LRKK and KPKK…TREE. Residues aspartate 360, asparagine 362, serine 364, aspartate 366, glutamate 371, aspartate 397, asparagine 399, aspartate 401, serine 403, and glutamate 408 each contribute to the Ca(2+) site. Asparagine 362 carries N-linked (GlcNAc...) asparagine glycosylation. Positions 416-447 are disordered; that stretch reads TREEGKANTRKRHTPRGNAESSSSNRQPRKQG.

Binds various proteins from the extracellular matrix. In terms of processing, N-glycosylated. As to expression, strongly expressed in ovary, followed by heart, muscle, spleen, brain, thymus, lung, liver, kidney, spleen, testis, ovary and skeletal muscle.

The protein localises to the secreted. It localises to the extracellular space. Its subcellular location is the extracellular matrix. The protein resides in the basement membrane. Functionally, can stimulate endothelial cell proliferation, migration, as well as angiogenesis. Promotes matrix assembly and cell adhesiveness. The sequence is that of SPARC-related modular calcium-binding protein 2 (Smoc2) from Mus musculus (Mouse).